The primary structure comprises 183 residues: MERVQPLEENVGNAARPRFERNKLLLVASVIQGLGLLLCFTYICLHFSALQVSHRYPRIQSIKVQFTEYKKEKGFILTSQKEDEIMKVQNNSVIINCDGFYLISLKGYFSQEVNISLHYQKDEEPLFQLKKVRSVNSLMVASLTYKDKVYLNVTTDNTSLDDFHVNGGELILIHQNPGEFCVL.

Topologically, residues 1-23 (MERVQPLEENVGNAARPRFERNK) are cytoplasmic. The chain crosses the membrane as a helical; Signal-anchor for type II membrane protein span at residues 24–50 (LLLVASVIQGLGLLLCFTYICLHFSAL). Residues 51 to 173 (QVSHRYPRIQ…HVNGGELILI (123 aa)) enclose the THD domain. Topologically, residues 51–183 (QVSHRYPRIQ…HQNPGEFCVL (133 aa)) are extracellular. Residues asparagine 90, asparagine 114, asparagine 152, and asparagine 157 are each glycosylated (N-linked (GlcNAc...) asparagine). An intrachain disulfide couples cysteine 97 to cysteine 181.

The protein belongs to the tumor necrosis factor family. Homotrimer.

It localises to the membrane. Cytokine that binds to TNFRSF4. Co-stimulates T-cell proliferation and cytokine production. The protein is Tumor necrosis factor ligand superfamily member 4 (TNFSF4) of Homo sapiens (Human).